The sequence spans 108 residues: Transcription factor S (108 aa).

C5, C8, C21, C24, C69, C72, C97, and C100 together coordinate Zn(2+). The segment at 5-24 (CPKCNNLMLPKDGKLKCAVC) adopts a C4-type zinc-finger fold. The TFIIS-type zinc-finger motif lies at 65–105 (TRIECPKCGHNEAYWWLQQTRCADEPETRFYKCKKCGHTWR).

It belongs to the archaeal RpoM/eukaryotic RPA12/RPB9/RPC11 RNA polymerase family.

In terms of biological role, induces RNA cleavage activity in the RNA polymerase. In its presence, the cleavage activity of the RNA polymerase truncates the RNA back to position +15 in a stepwise manner by releasing mainly dinucleotides from the 3'-end of the nascent RNA. The truncated RNAs are able to continue elongation. Involved in transcriptional proofreading and fidelity. Misincorporation of nucleotides during elongation of transcription leads to arrested elongation complexes which are rescued by TFS-promoted removal of a dinucleotide from the 3'-end. TFS is able to induce a cleavage resynthesis cycle in stalled elongation complexes (resulting from the next missing nucleotide or a reduced incorporation rate of a wrong nucleotide) preventing misincorporation and enabling proofreading in a post-incorporation manner. Pausing of elongation complexes is the main determinant of TFS-induced RNA cleavage. This chain is Transcription factor S, found in Methanocaldococcus jannaschii (strain ATCC 43067 / DSM 2661 / JAL-1 / JCM 10045 / NBRC 100440) (Methanococcus jannaschii).